Reading from the N-terminus, the 1103-residue chain is PALM2-AKAP2 fusion protein (1103 aa).

Disordered stretches follow at residues 178–197 (ESAS…KKPP) and 304–396 (YNGT…SSRD). The span at 179 to 189 (SASNATETSGP) shows a compositional bias: polar residues. A phosphoserine mark is found at Ser322, Ser352, and Ser383. The span at 380–392 (VPVSPSSTTSSRC) shows a compositional bias: low complexity. Lys405 is covalently cross-linked (Glycyl lysine isopeptide (Lys-Gly) (interchain with G-Cter in SUMO1); alternate). Lys405 participates in a covalent cross-link: Glycyl lysine isopeptide (Lys-Gly) (interchain with G-Cter in SUMO2); alternate. A coiled-coil region spans residues 444-521 (EEMLELEKER…QKQLQQQQQQ (78 aa)). 2 disordered regions span residues 483-544 (EQLD…DKAK) and 566-662 (NSRQ…SKLW). Basic and acidic residues predominate over residues 490-505 (LESHKKYKERKERRAQ). The segment covering 506-521 (QEQLLLQKQLQQQQQQ) has biased composition (low complexity). A compositionally biased stretch (polar residues) spans 522–531 (PPSQLCTAPA). Residues 533–544 (SHERASMIDKAK) are compositionally biased toward basic and acidic residues. Residues 566–579 (NSRQAVAKGQSTPR) are compositionally biased toward polar residues. Ser567 and Ser624 each carry phosphoserine. A compositionally biased stretch (polar residues) spans 633-643 (AAGSQGNTASQ). A phosphoserine mark is found at Ser692, Ser696, and Ser748. A compositionally biased stretch (polar residues) spans 745 to 763 (QENSLADFSLPQTPQTDNP). The tract at residues 745 to 794 (QENSLADFSLPQTPQTDNPSEGRGEGVSKSFSDHGFYSPSSTLGDSPLVD) is disordered. Thr757 is modified (phosphothreonine). Residues 797 to 810 (LEYQAGLLVQNAIQ) are PKA-RII subunit binding domain. The span at 817-829 (VDKAVSKTSRDGA) shows a compositional bias: basic and acidic residues. A disordered region spans residues 817–907 (VDKAVSKTSR…GPINMEETRP (91 aa)). The residue at position 862 (Ser862) is a Phosphoserine. The span at 865–886 (QEKRDVLPKILPAEDRALRERG) shows a compositional bias: basic and acidic residues. The stretch at 941–979 (KLRSRKQRTLSMIEEEIRAAQEREEELKRQRQVLQSTQS) forms a coiled coil. Phosphoserine is present on residues Ser951, Ser979, Ser1009, and Ser1016. A disordered region spans residues 962 to 1035 (EREEELKRQR…AAGTQRPKNL (74 aa)). Over residues 976–990 (STQSPRTKNAPSLPS) the composition is skewed to polar residues.

In terms of tissue distribution, expressed in infantile heart and muscle, and fibroblasts.

The protein localises to the apical cell membrane. Functionally, binds to regulatory subunit (RII) of protein kinase A. May be involved in establishing polarity in signaling systems or in integrating PKA-RII isoforms with downstream effectors to capture, amplify and focus diffuse, trans-cellular signals carried by cAMP. Binds to and modulates the structure of the actin cytoskeleton. This is PALM2-AKAP2 fusion protein from Homo sapiens (Human).